A 425-amino-acid chain; its full sequence is Interferon-activable protein 211 (425 aa).

The Pyrin domain occupies Met-1–Glu-88. Positions Arg-86–Gly-99 are enriched in basic and acidic residues. The segment at Arg-86–Val-223 is disordered. Over residues Thr-122 to Ala-153 the composition is skewed to low complexity. A run of 4 repeats spans residues Thr-129–Gly-135, Thr-136–Gly-142, Thr-143–Gly-149, and Thr-150–Arg-156. The segment at Thr-129–Gln-177 is 4 X 7 AA tandem repeats of T-S-T-A-Q-A-[GR]. Residues Met-159–Asp-176 show a composition bias toward basic and acidic residues. A compositionally biased stretch (low complexity) spans Ser-190–Ala-206. The span at Lys-207–Ile-218 shows a compositional bias: polar residues. Positions Pro-213–Thr-413 constitute an HIN-200 domain.

The protein belongs to the HIN-200 family. In terms of assembly, interacts with HOXB2. Mononuclear phagocytes.

The protein resides in the nucleus. Functionally, inhibits cell growth via p53/TP53 and RB1-dependent and independent pathways. May work in synergy with TP53 to promote the transcription of CDKN1A/P21. The sequence is that of Interferon-activable protein 211 from Mus musculus (Mouse).